We begin with the raw amino-acid sequence, 524 residues long: GMP synthase [glutamine-hydrolyzing] (524 aa).

Residues 9-207 (RILILDFGSQ…VIHICQCIPN (199 aa)) form the Glutamine amidotransferase type-1 domain. The active-site Nucleophile is the Cys-86. Active-site residues include His-181 and Glu-183. A GMPS ATP-PPase domain is found at 208–399 (WTTKHIIEDS…LGLPADLIYR (192 aa)). 235-241 (SGGVDSA) lines the ATP pocket.

As to quaternary structure, homodimer.

It catalyses the reaction XMP + L-glutamine + ATP + H2O = GMP + L-glutamate + AMP + diphosphate + 2 H(+). The protein operates within purine metabolism; GMP biosynthesis; GMP from XMP (L-Gln route): step 1/1. Functionally, catalyzes the synthesis of GMP from XMP. The polypeptide is GMP synthase [glutamine-hydrolyzing] (Coxiella burnetii (strain CbuG_Q212) (Coxiella burnetii (strain Q212))).